Consider the following 111-residue polypeptide: Holo-[acyl-carrier-protein] synthase (111 aa).

Mg(2+) contacts are provided by D8 and E57.

It belongs to the P-Pant transferase superfamily. AcpS family. It depends on Mg(2+) as a cofactor.

It is found in the cytoplasm. The catalysed reaction is apo-[ACP] + CoA = holo-[ACP] + adenosine 3',5'-bisphosphate + H(+). Functionally, transfers the 4'-phosphopantetheine moiety from coenzyme A to a Ser of acyl-carrier-protein. In Mycoplasmoides gallisepticum (strain R(low / passage 15 / clone 2)) (Mycoplasma gallisepticum), this protein is Holo-[acyl-carrier-protein] synthase.